Here is a 434-residue protein sequence, read N- to C-terminus: Transcription factor AP-2-epsilon (434 aa).

The interval 30–123 (LNQGPYSSAP…GLSLDPRRDY (94 aa)) is disordered. Over residues 52 to 62 (PYFPPPYPQPP) the composition is skewed to pro residues. Positions 53-58 (YFPPPY) match the PPxY motif motif. Over residues 81–97 (SSINSIHHQHQQPSWHT) the composition is skewed to polar residues. Positions 278–408 (RRKAANVTLL…YLLESLKGMD (131 aa)) are H-S-H (helix-span-helix), dimerization. Positions 415-434 (TGNGHSAAESKSEKDIKHRK) are disordered. Residues 422–434 (AESKSEKDIKHRK) are compositionally biased toward basic and acidic residues.

The protein belongs to the AP-2 family. In terms of assembly, binds DNA as a dimer. Can form homodimers or heterodimers with other AP-2 family members.

It localises to the nucleus. In terms of biological role, sequence-specific DNA-binding protein that interacts with inducible viral and cellular enhancer elements to regulate transcription of selected genes. AP-2 factors bind to the consensus sequence 5'-GCCNNNGGC-3' and activate genes involved in a large spectrum of important biological functions. The polypeptide is Transcription factor AP-2-epsilon (Xenopus laevis (African clawed frog)).